The primary structure comprises 486 residues: Keratin-3, type I cytoskeletal 51 kDa (486 aa).

Residues 1 to 125 (MSNYSIKQSA…AGGMDIFSTN (125 aa)) form a head region. Residues 126–161 (EKQTMQNLNDRLASYLDKVHALETANTELERKIKEW) are coil 1A. The region spanning 126-442 (EKQTMQNLND…RLLDGDLSKP (317 aa)) is the IF rod domain. Residues 162–184 (YEKQRPGSSSGDGAKDYSKYYTM) form a linker 1 region. The interval 185-276 (INDLKNQIIA…KNHEDELKGM (92 aa)) is coil 1B. The tract at residues 277–299 (QVTQVGQVNVEMNAAPSSDLTKI) is linker 12. Residues 300–438 (LNDMRSQYED…ETYRRLLDGD (139 aa)) form a coil 2 region. Residues 435–466 (LDGDLSKPKSGGGTSTNTGSTSSKGSTRTVKR) form a disordered region. A tail region spans residues 439–486 (LSKPKSGGGTSTNTGSTSSKGSTRTVKRREIIEEVVDGKVVSTKVVDM). Low complexity predominate over residues 449 to 461 (STNTGSTSSKGST).

It belongs to the intermediate filament family. In terms of assembly, heterotetramer of two type I and two type II keratins.

This Xenopus laevis (African clawed frog) protein is Keratin-3, type I cytoskeletal 51 kDa.